The primary structure comprises 218 residues: 23 kDa integral membrane protein (218 aa).

The Cytoplasmic segment spans residues 1 to 12 (MATLGTGMRCLK). The chain crosses the membrane as a helical span at residues 13–36 (SCVFVLNIICLLCSLVLIGAGAYV). The Extracellular segment spans residues 37–55 (EVKFSQYGDNLHKVWQAAP). The chain crosses the membrane as a helical span at residues 56 to 71 (IAIIVVGVIILIVSFL). Residues 72–82 (GCCGAIKENVC) are Cytoplasmic-facing. A helical membrane pass occupies residues 83-108 (MLYMYAFFLVVLLIAELAAAIVAVVY). The Extracellular segment spans residues 109-183 (KDRIDSEIDA…SVFGAFLKRN (75 aa)). Asn-165 carries N-linked (GlcNAc...) asparagine glycosylation. Residues 184 to 205 (LVIVACVAFGVCFFQLLSIVIA) form a helical membrane-spanning segment. The Cytoplasmic segment spans residues 206–218 (CCLGRQIKEYENV).

It belongs to the tetraspanin (TM4SF) family.

The protein resides in the membrane. This Schistosoma mansoni (Blood fluke) protein is 23 kDa integral membrane protein.